A 213-amino-acid polypeptide reads, in one-letter code: MTDQSHQCVIIGISGASASGKSLISSTLYRELRDQVGDQHIGVISEDSYYKDQSHLTMEERVKTNYDHPSSMDHSLLIKHLQMLKSGQAIEVPQYSYVEHTRKQETVHIELKKVIILEGILLLTDARLRNEMNFSIFVDTPLDICLLRRMRRDVNERGRSMDSVMEQYQKTVRPMFLQFIEPSKQYADIIVPRGGKNRIAIDILKAKISQFFE.

Position 15–22 (15–22 (GASASGKS)) interacts with ATP.

Belongs to the uridine kinase family.

It is found in the cytoplasm. It catalyses the reaction uridine + ATP = UMP + ADP + H(+). The enzyme catalyses cytidine + ATP = CMP + ADP + H(+). It participates in pyrimidine metabolism; CTP biosynthesis via salvage pathway; CTP from cytidine: step 1/3. It functions in the pathway pyrimidine metabolism; UMP biosynthesis via salvage pathway; UMP from uridine: step 1/1. This chain is Uridine kinase, found in Pectobacterium atrosepticum (strain SCRI 1043 / ATCC BAA-672) (Erwinia carotovora subsp. atroseptica).